The following is a 468-amino-acid chain: Elongation factor 1-alpha (468 aa).

Positions 6–244 (KPHINIVVIG…DNIPLPARPS (239 aa)) constitute a tr-type G domain. The G1 stretch occupies residues 15–22 (GHVDSGKS). Residue 15-22 (GHVDSGKS) participates in GTP binding. The interval 71-75 (GITID) is G2. The segment at 92-95 (DAPG) is G3. GTP-binding positions include 92-96 (DAPGH) and 154-157 (NKID). The G4 stretch occupies residues 154-157 (NKID). The interval 195-197 (SGW) is G5. 5-glutamyl glycerylphosphorylethanolamine is present on residues glutamate 303 and glutamate 376.

The protein belongs to the TRAFAC class translation factor GTPase superfamily. Classic translation factor GTPase family. EF-Tu/EF-1A subfamily.

Its subcellular location is the cytoplasm. Its function is as follows. This protein promotes the GTP-dependent binding of aminoacyl-tRNA to the A-site of ribosomes during protein biosynthesis. This Hydra vulgaris (Hydra) protein is Elongation factor 1-alpha.